The chain runs to 306 residues: 4-hydroxy-3-methylbut-2-enyl diphosphate reductase 1 (306 aa).

Residue cysteine 10 coordinates [4Fe-4S] cluster. Positions 39 and 72 each coordinate (2E)-4-hydroxy-3-methylbut-2-enyl diphosphate. Residues histidine 39 and histidine 72 each contribute to the dimethylallyl diphosphate site. Residues histidine 39 and histidine 72 each coordinate isopentenyl diphosphate. Cysteine 94 provides a ligand contact to [4Fe-4S] cluster. (2E)-4-hydroxy-3-methylbut-2-enyl diphosphate is bound at residue histidine 122. Residue histidine 122 coordinates dimethylallyl diphosphate. Histidine 122 provides a ligand contact to isopentenyl diphosphate. Glutamate 124 acts as the Proton donor in catalysis. Threonine 162 provides a ligand contact to (2E)-4-hydroxy-3-methylbut-2-enyl diphosphate. A [4Fe-4S] cluster-binding site is contributed by cysteine 192. The (2E)-4-hydroxy-3-methylbut-2-enyl diphosphate site is built by serine 220, serine 221, asparagine 222, and serine 264. Dimethylallyl diphosphate contacts are provided by serine 220, serine 221, asparagine 222, and serine 264. Isopentenyl diphosphate contacts are provided by serine 220, serine 221, asparagine 222, and serine 264.

Belongs to the IspH family. The cofactor is [4Fe-4S] cluster.

The catalysed reaction is isopentenyl diphosphate + 2 oxidized [2Fe-2S]-[ferredoxin] + H2O = (2E)-4-hydroxy-3-methylbut-2-enyl diphosphate + 2 reduced [2Fe-2S]-[ferredoxin] + 2 H(+). It catalyses the reaction dimethylallyl diphosphate + 2 oxidized [2Fe-2S]-[ferredoxin] + H2O = (2E)-4-hydroxy-3-methylbut-2-enyl diphosphate + 2 reduced [2Fe-2S]-[ferredoxin] + 2 H(+). It functions in the pathway isoprenoid biosynthesis; dimethylallyl diphosphate biosynthesis; dimethylallyl diphosphate from (2E)-4-hydroxy-3-methylbutenyl diphosphate: step 1/1. Its pathway is isoprenoid biosynthesis; isopentenyl diphosphate biosynthesis via DXP pathway; isopentenyl diphosphate from 1-deoxy-D-xylulose 5-phosphate: step 6/6. Its function is as follows. Catalyzes the conversion of 1-hydroxy-2-methyl-2-(E)-butenyl 4-diphosphate (HMBPP) into a mixture of isopentenyl diphosphate (IPP) and dimethylallyl diphosphate (DMAPP). Acts in the terminal step of the DOXP/MEP pathway for isoprenoid precursor biosynthesis. The protein is 4-hydroxy-3-methylbut-2-enyl diphosphate reductase 1 of Rhodopseudomonas palustris (strain ATCC BAA-98 / CGA009).